The chain runs to 530 residues: UDP-N-acetylmuramoyl-L-alanyl-D-glutamate--2,6-diaminopimelate ligase (530 aa).

UDP-N-acetyl-alpha-D-muramoyl-L-alanyl-D-glutamate is bound at residue Ser21. 99–105 (GTNGKSS) contributes to the ATP binding site. UDP-N-acetyl-alpha-D-muramoyl-L-alanyl-D-glutamate is bound by residues 145-146 (TT), Ser172, Gln178, and Arg180. The residue at position 212 (Lys212) is an N6-carboxylysine. The 49-residue stretch at 221–269 (FKPAYREEFKGDTEHSTTAYILVREDASTGSTSKLLLEAKFGKMSTEYL) folds into the RPE1 insert domain. Residues Arg422, 446-449 (DNPR), Gly496, and Glu500 each bind meso-2,6-diaminopimelate. The short motif at 446–449 (DNPR) is the Meso-diaminopimelate recognition motif element.

Belongs to the MurCDEF family. MurE subfamily. Requires Mg(2+) as cofactor. Carboxylation is probably crucial for Mg(2+) binding and, consequently, for the gamma-phosphate positioning of ATP.

The protein resides in the cytoplasm. It carries out the reaction UDP-N-acetyl-alpha-D-muramoyl-L-alanyl-D-glutamate + meso-2,6-diaminopimelate + ATP = UDP-N-acetyl-alpha-D-muramoyl-L-alanyl-gamma-D-glutamyl-meso-2,6-diaminopimelate + ADP + phosphate + H(+). It functions in the pathway cell wall biogenesis; peptidoglycan biosynthesis. Functionally, catalyzes the addition of meso-diaminopimelic acid to the nucleotide precursor UDP-N-acetylmuramoyl-L-alanyl-D-glutamate (UMAG) in the biosynthesis of bacterial cell-wall peptidoglycan. This chain is UDP-N-acetylmuramoyl-L-alanyl-D-glutamate--2,6-diaminopimelate ligase, found in Rickettsia felis (strain ATCC VR-1525 / URRWXCal2) (Rickettsia azadi).